A 320-amino-acid chain; its full sequence is MNAPFVVSPVRHDWSRHEIKALYDLPLLELIARASQIHALYHDPNDLQKASLLSIKTGGCSEDCGYCSQSARRDEVHLDRVEMMSPSDVLAVAAQARDNGADRFCMGAAWRQVRDGAAFDAVLEMVEGVRALGMEACVTLGMLNQSQAQRLKQAGLTAYNHNLDTSPEFYPQIVTTHTYDERLATLEAVRGEGIALCCGGIIGMGETVEDRVALLAILAGFDPHPESVPINALVPVAGTPLGDRQKLDPLEIVRMIATARLVMPDSRIRLSAGRSSLSREAQILCMVAGANSIFSGNVLLTTPNASLDADEALMEALAPR.

Positions 45–274 (NDLQKASLLS…DSRIRLSAGR (230 aa)) constitute a Radical SAM core domain. The [4Fe-4S] cluster site is built by Cys60, Cys64, and Cys67. Cys105, Cys137, Cys197, and Arg269 together coordinate [2Fe-2S] cluster.

The protein belongs to the radical SAM superfamily. Biotin synthase family. In terms of assembly, homodimer. [4Fe-4S] cluster serves as cofactor. The cofactor is [2Fe-2S] cluster.

The enzyme catalyses (4R,5S)-dethiobiotin + (sulfur carrier)-SH + 2 reduced [2Fe-2S]-[ferredoxin] + 2 S-adenosyl-L-methionine = (sulfur carrier)-H + biotin + 2 5'-deoxyadenosine + 2 L-methionine + 2 oxidized [2Fe-2S]-[ferredoxin]. Its pathway is cofactor biosynthesis; biotin biosynthesis; biotin from 7,8-diaminononanoate: step 2/2. Functionally, catalyzes the conversion of dethiobiotin (DTB) to biotin by the insertion of a sulfur atom into dethiobiotin via a radical-based mechanism. In Beijerinckia indica subsp. indica (strain ATCC 9039 / DSM 1715 / NCIMB 8712), this protein is Biotin synthase.